We begin with the raw amino-acid sequence, 225 residues long: MAEGETESPGPKKCGPYISSVTSQSVNLMIRGVVLFFIGVFLALVLNLLQIQRNVTLFPPDVIASIFSSAWWVPPCCGTASAVIGLLYPCIDRHLGEPHKFKREWSSVMRCVAVFVGINHASAKVDFDNNIQLSLTLAALSIGLWWTFDRSRSGFGLGVGIAFLATLVTQLLVYNGVYQYTSPDFLYVRSWLPCIFFAGGITMGNIGRQLAMYECKVIAEKSHQE.

At 1 to 28 (MAEGETESPGPKKCGPYISSVTSQSVNL) the chain is on the cytoplasmic side. The chain crosses the membrane as a helical span at residues 29 to 51 (MIRGVVLFFIGVFLALVLNLLQI). The Lumenal segment spans residues 52–70 (QRNVTLFPPDVIASIFSSA). Residues 71-88 (WWVPPCCGTASAVIGLLY) traverse the membrane as a helical segment. The Cytoplasmic segment spans residues 89–103 (PCIDRHLGEPHKFKR). The chain crosses the membrane as a helical span at residues 104–126 (EWSSVMRCVAVFVGINHASAKVD). The Lumenal segment spans residues 127–129 (FDN). A helical membrane pass occupies residues 130 to 148 (NIQLSLTLAALSIGLWWTF). Topologically, residues 149–153 (DRSRS) are cytoplasmic. Ser-151 carries the phosphoserine modification. A helical transmembrane segment spans residues 154–175 (GFGLGVGIAFLATLVTQLLVYN). Over 176–189 (GVYQYTSPDFLYVR) the chain is Lumenal. A helical membrane pass occupies residues 190 to 207 (SWLPCIFFAGGITMGNIG). The Cytoplasmic segment spans residues 208–225 (RQLAMYECKVIAEKSHQE). Cys-215 is modified (cysteine sulfenic acid (-SOH); alternate). Residue Cys-215 forms a Glycyl cysteine thioester (Cys-Gly) (interchain with G-Cter in ubiquitin); alternate linkage. The KxHxx signature appears at 219–225 (AEKSHQE).

Belongs to the INSIG family. As to quaternary structure, interacts with SCAP; interaction is direct and only takes place in the presence of sterols; it prevents interaction between SCAP and the coat protein complex II (COPII). Associates with the SCAP-SREBP complex (composed of SCAP and SREBF1/SREBP1 or SREBF2/SREBP2); association is mediated via its interaction with SCAP and only takes place in the presence of sterols. Interacts with RNF139. Interacts with RNF145. Post-translationally, phosphorylation at Ser-151 by PCK1 reduces binding to oxysterol, disrupting the interaction between INSIG2 and SCAP, thereby promoting nuclear translocation of SREBP proteins (SREBF1/SREBP1 or SREBF2/SREBP2) and subsequent transcription of downstream lipogenesis-related genes. Polyubiquitinated by AMFR/gp78 at Cys-215 in some tissues such as adipose tissues, undifferentiated myoblasts and liver, leading to its degradation. In differentiated myotubes, Cys-215 oxidation prevents ubiquitination at the same site, resulting in protein stabilization. In terms of processing, oxidized at Cys-215 in differentiated myotubes, preventing ubiquitination at the same site, and resulting in protein stabilization.

The protein localises to the endoplasmic reticulum membrane. Oxysterol-binding protein that mediates feedback control of cholesterol synthesis by controlling both endoplasmic reticulum to Golgi transport of SCAP and degradation of HMGCR. Acts as a negative regulator of cholesterol biosynthesis by mediating the retention of the SCAP-SREBP complex in the endoplasmic reticulum, thereby blocking the processing of sterol regulatory element-binding proteins (SREBPs) SREBF1/SREBP1 and SREBF2/SREBP2. Binds oxysterol, including 22-hydroxycholesterol, 24-hydroxycholesterol, 25-hydroxycholesterol and 27-hydroxycholesterol, regulating interaction with SCAP and retention of the SCAP-SREBP complex in the endoplasmic reticulum. In presence of oxysterol, interacts with SCAP, retaining the SCAP-SREBP complex in the endoplasmic reticulum, thereby preventing SCAP from escorting SREBF1/SREBP1 and SREBF2/SREBP2 to the Golgi. Sterol deprivation or phosphorylation by PCK1 reduce oxysterol-binding, disrupting the interaction between INSIG2 and SCAP, thereby promoting Golgi transport of the SCAP-SREBP complex, followed by processing and nuclear translocation of SREBF1/SREBP1 and SREBF2/SREBP2. Also regulates cholesterol synthesis by regulating degradation of HMGCR: initiates the sterol-mediated ubiquitin-mediated endoplasmic reticulum-associated degradation (ERAD) of HMGCR via recruitment of the reductase to the ubiquitin ligase RNF139. The polypeptide is Insulin-induced gene 2 protein (Papio anubis (Olive baboon)).